A 741-amino-acid chain; its full sequence is Catalase-peroxidase 2 (741 aa).

The signal sequence occupies residues 1-28 (MQRNRIAKSVLAALAVIAMSAGSISARA). Positions 107-228 (WHGAGTYRTY…LAATQMGLIY (122 aa)) form a cross-link, tryptophyl-tyrosyl-methioninium (Trp-Tyr) (with M-254). The Proton acceptor role is filled by histidine 108. Positions 228–254 (YVNPEGPNGNPDPVAAAQDIREAFGRM) form a cross-link, tryptophyl-tyrosyl-methioninium (Tyr-Met) (with W-107). Residue histidine 269 coordinates heme b.

It belongs to the peroxidase family. Peroxidase/catalase subfamily. In terms of assembly, homodimer or homotetramer. Heme b is required as a cofactor. Post-translationally, formation of the three residue Trp-Tyr-Met cross-link is important for the catalase, but not the peroxidase activity of the enzyme.

It catalyses the reaction H2O2 + AH2 = A + 2 H2O. The enzyme catalyses 2 H2O2 = O2 + 2 H2O. Bifunctional enzyme with both catalase and broad-spectrum peroxidase activity. The chain is Catalase-peroxidase 2 from Burkholderia vietnamiensis (strain G4 / LMG 22486) (Burkholderia cepacia (strain R1808)).